We begin with the raw amino-acid sequence, 295 residues long: 33 kDa chaperonin (295 aa).

2 disulfide bridges follow: C236–C238 and C269–C272.

This sequence belongs to the HSP33 family. Under oxidizing conditions two disulfide bonds are formed involving the reactive cysteines. Under reducing conditions zinc is bound to the reactive cysteines and the protein is inactive.

Its subcellular location is the cytoplasm. Its function is as follows. Redox regulated molecular chaperone. Protects both thermally unfolding and oxidatively damaged proteins from irreversible aggregation. Plays an important role in the bacterial defense system toward oxidative stress. In Citrifermentans bemidjiense (strain ATCC BAA-1014 / DSM 16622 / JCM 12645 / Bem) (Geobacter bemidjiensis), this protein is 33 kDa chaperonin.